The primary structure comprises 189 residues: UPF0149 protein VFMJ11_2207 (189 aa).

This sequence belongs to the UPF0149 family.

The polypeptide is UPF0149 protein VFMJ11_2207 (Aliivibrio fischeri (strain MJ11) (Vibrio fischeri)).